We begin with the raw amino-acid sequence, 414 residues long: WD repeat-containing protein jip5 (414 aa).

5 WD repeats span residues 9 to 48, 73 to 112, 118 to 159, 222 to 263, and 319 to 356; these read PLSA…SSDD, RHKG…VENK, AKDG…SNVS, VSSV…DQDE, and DETE…NDMD. Positions 39–65 are disordered; the sequence is RLPSEESSDDDDGTASNSSARNGKGHI. A disordered region spans residues 357–414; that stretch reads VDMAGGKRMFGGDSDDSDDDNDSEDSEQEQRQPVEPQRKRKKNKGKGKRDIIAFADID. Acidic residues predominate over residues 369 to 383; the sequence is DSDDSDDDNDSEDSE. A compositionally biased stretch (basic residues) spans 394–403; the sequence is RKRKKNKGKG.

It belongs to the WD repeat WDR55 family.

The protein resides in the nucleus. The protein localises to the nucleolus. This is WD repeat-containing protein jip5 (jip5) from Aspergillus clavatus (strain ATCC 1007 / CBS 513.65 / DSM 816 / NCTC 3887 / NRRL 1 / QM 1276 / 107).